The following is a 132-amino-acid chain: Small ribosomal subunit protein uS8 (132 aa).

This sequence belongs to the universal ribosomal protein uS8 family. As to quaternary structure, part of the 30S ribosomal subunit. Contacts proteins S5 and S12.

One of the primary rRNA binding proteins, it binds directly to 16S rRNA central domain where it helps coordinate assembly of the platform of the 30S subunit. This is Small ribosomal subunit protein uS8 from Exiguobacterium sp. (strain ATCC BAA-1283 / AT1b).